The primary structure comprises 105 residues: UPF0235 protein Mext_2130 (105 aa).

This sequence belongs to the UPF0235 family.

The chain is UPF0235 protein Mext_2130 from Methylorubrum extorquens (strain PA1) (Methylobacterium extorquens).